The primary structure comprises 388 residues: MAVSVTPIRDTKWLTLEVCREFQRGTCSRPDTECKFAHPSKSCQVENGRVIACFDSLKGRCSRENCKYLHPPPHLKTQLEINGRNNLIQQKNMAMLAQQMQLANAMMPGAPLQPVPMFSVAPSLATNASAAAFNPYLGPVSPSLVPAEILPTAPMLVTGNPGVPVPAAAAAAAQKLMRTDRLEVCREYQRGNCNRGENDCRFAHPADSTMIDTNDNTVTVCMDYIKGRCSREKCKYFHPPAHLQAKIKAAQYQVNQAAAAQAAATAAAMTQSAVKSLKRPLEATFDLGIPQAVLPPLPKRPALEKTNGATAVFNTGIFQYQQALANMQLQQHTAFLPPVPMVHGATPATVSAATTSATSVPFAATATANQIPIISAEHLTSHKYVTQM.

Position 6 is a phosphothreonine (Thr6). 4 consecutive C3H1-type zinc fingers follow at residues 13–41 (WLTL…HPSK), 47–73 (NGRV…HPPP), 179–207 (TDRL…HPAD), and 215–241 (DNTV…HPPA).

The protein belongs to the muscleblind family. As to quaternary structure, interacts with DDX1 and YBX1. Interacts with HNRNPH1; the interaction in RNA-independent. Interacts with RBPMS; the interaction allows cooperative assembly of RNA-bound stable cell-specific alternative splicing regulatory complexes. Highly expressed in cardiac, skeletal muscle and during myoblast differentiation. Weakly expressed in other tissues (at protein level). Expressed in heart, brain, placenta, lung, liver, skeletal muscle, kidney and pancreas.

The protein localises to the nucleus. It is found in the cytoplasm. It localises to the cytoplasmic granule. Functionally, mediates pre-mRNA alternative splicing regulation. Acts either as activator or repressor of splicing on specific pre-mRNA targets. Inhibits cardiac troponin-T (TNNT2) pre-mRNA exon inclusion but induces insulin receptor (IR) pre-mRNA exon inclusion in muscle. Antagonizes the alternative splicing activity pattern of CELF proteins. Regulates the TNNT2 exon 5 skipping through competition with U2AF2. Inhibits the formation of the spliceosome A complex on intron 4 of TNNT2 pre-mRNA. Binds to the stem-loop structure within the polypyrimidine tract of TNNT2 intron 4 during spliceosome assembly. Binds to the 5'-YGCU(U/G)Y-3'consensus sequence. Binds to the IR RNA. Binds to expanded CUG repeat RNA, which folds into a hairpin structure containing GC base pairs and bulged, unpaired U residues. Together with RNA binding proteins RBPMS and RBFOX2, activates vascular smooth muscle cells alternative splicing events. Regulates NCOR2 alternative splicing. The sequence is that of Muscleblind-like protein 1 (MBNL1) from Homo sapiens (Human).